The sequence spans 348 residues: Inositol 2-dehydrogenase/D-chiro-inositol 3-dehydrogenase (348 aa).

Belongs to the Gfo/Idh/MocA family. In terms of assembly, homotetramer.

The enzyme catalyses myo-inositol + NAD(+) = scyllo-inosose + NADH + H(+). It catalyses the reaction 1D-chiro-inositol + NAD(+) = scyllo-inosine + NADH + H(+). It participates in polyol metabolism; myo-inositol degradation into acetyl-CoA; acetyl-CoA from myo-inositol: step 1/7. Involved in the oxidation of myo-inositol (MI) and D-chiro-inositol (DCI) to 2-keto-myo-inositol (2KMI or 2-inosose) and 1-keto-D-chiro-inositol (1KDCI), respectively. This is Inositol 2-dehydrogenase/D-chiro-inositol 3-dehydrogenase from Halalkalibacterium halodurans (strain ATCC BAA-125 / DSM 18197 / FERM 7344 / JCM 9153 / C-125) (Bacillus halodurans).